A 517-amino-acid polypeptide reads, in one-letter code: Sphingolipid C9-methyltransferase A (517 aa).

Transmembrane regions (helical) follow at residues 58–78 and 80–100; these read LLIL…GGGL and TTIF…WSIA. S-adenosyl-L-methionine contacts are provided by residues 223–224, 286–291, and 316–317; these read YT, TLGRNQ, and YR. N-linked (GlcNAc...) asparagine glycosylation occurs at Asn290. Asn478 carries an N-linked (GlcNAc...) asparagine glycan.

The protein belongs to the CFA/CMAS family.

Its subcellular location is the membrane. The enzyme catalyses a (4E,8E)-4-sphinga-4,8-dienine ceramide + S-adenosyl-L-methionine = a 9-methyl-(4E,8E)-sphinga-4,8-dienine ceramide + S-adenosyl-L-homocysteine + H(+). It participates in lipid metabolism; sphingolipid metabolism. Functionally, catalyzes methylation of the sphingoid base component of glucosylceramides (GluCers) at the C9-position. Sphingolipid C9-methylation requires 4,8-desaturated ceramides as substrates. Glucosylceramides play important roles in growth, differentiation and pathogenicity. The methyl group at the C9-position distinguishes fungal glucosylceramides from those of plants and animals and may thus play a role in host-pathogen interactions enabling the host to recognize the fungal attack and initiate specific defense responses. This Emericella nidulans (strain FGSC A4 / ATCC 38163 / CBS 112.46 / NRRL 194 / M139) (Aspergillus nidulans) protein is Sphingolipid C9-methyltransferase A.